A 162-amino-acid chain; its full sequence is MNGVAAALLVWILTSPSSSDHGSENGWPKHTACNSGGLEVVYQSCDPLQDFGLSIDQCSKQIQSNLNIRFGIILRQDIRKLFLDITLMAKGSSILNYSYPLCEEDQPKFSFCGRRKGEQIYYAGPVNNPGLDVPQGEYQLLLELYNENRATVACANATVTSS.

An N-terminal signal peptide occupies residues 1–19 (MNGVAAALLVWILTSPSSS). Intrachain disulfides connect Cys-33-Cys-58, Cys-45-Cys-154, and Cys-102-Cys-112. The N-linked (GlcNAc...) asparagine glycan is linked to Asn-96. Asn-156 carries N-linked (GlcNAc...) asparagine glycosylation.

In terms of assembly, M-shaped tetramer of two CD180-LY86 heterodimers. In terms of tissue distribution, highly expressed in spleen, liver, brain and thymus, and at lower levels in kidney.

It localises to the secreted. Its subcellular location is the extracellular space. In terms of biological role, may cooperate with CD180 and TLR4 to mediate the innate immune response to bacterial lipopolysaccharide (LPS) and cytokine production. Important for efficient CD180 cell surface expression. The sequence is that of Lymphocyte antigen 86 (Ly86) from Mus musculus (Mouse).